The chain runs to 459 residues: Cysteine desulfurase (459 aa).

The transit peptide at 1-17 (MVGSVAGNMLLRAAWRR) directs the protein to the mitochondrion. Residues alanine 129, threonine 130, glutamine 237, serine 257, and histidine 259 each contribute to the pyridoxal 5'-phosphate site. Lysine 260 is modified (N6-(pyridoxal phosphate)lysine). Threonine 297 serves as a coordination point for pyridoxal 5'-phosphate. Catalysis depends on cysteine 383, which acts as the Cysteine persulfide intermediate. Cysteine 383 provides a ligand contact to [2Fe-2S] cluster. Cysteine 383 provides a ligand contact to Zn(2+). Cysteine 383 carries the cysteine persulfide modification.

It belongs to the class-V pyridoxal-phosphate-dependent aminotransferase family. NifS/IscS subfamily. Homodimer. Component of the mitochondrial core iron-sulfur cluster (ISC) complex composed of NFS1, LYRM4, NDUFAB1, ISCU, FXN, and FDX2; this complex is a heterohexamer containing two copies of each monomer. Component of cyteine desulfurase complex composed of NFS1, LYRM4 and NDUFAB1; this complex contributes to the activation of cysteine desulfurase activity and NFS1 stabilization. Interacts (homodimer form) with ISCU (D-state); each monomer interacts with the C-terminal regions of each NFS1 monomer. Interacts with HSPA9. Interacts (via homodimer form) with FDX2. Interacts (via homodimer form) with FXN. Interacts with LYRM4. Component of a complex composed of FXN, NFS1, LYRM4 and ISCU. Pyridoxal 5'-phosphate is required as a cofactor. In terms of processing, N-gluconoylated. Post-translationally, cysteine persulfide intermediate is reduced by thiol-containing molecules like glutathione and L-cysteine. Persulfide reduction is a rate-limiting step of cysteine desulfurase catalytic cycle. Ubiquitous.

It localises to the mitochondrion. The catalysed reaction is (sulfur carrier)-H + L-cysteine = (sulfur carrier)-SH + L-alanine. It catalyses the reaction L-cysteinyl-[cysteine desulfurase] + L-cysteine = S-sulfanyl-L-cysteinyl-[cysteine desulfurase] + L-alanine. Its activity is regulated as follows. Active only in complex with LYRM4. Functionally, mitochondrial cysteine desulfurase, of the core iron-sulfur cluster (ISC) assembly complex, that catalyzes the desulfuration of L-cysteine to L-alanine, as component of the cysteine desulfurase complex, leading to the formation of a cysteine persulfide intermediate at the active site cysteine residue and participates in the [2Fe-2S] clusters assembly on the scaffolding protein ISCU. The persulfide is then transferred on the flexible Cys loop from the catalytic site of NFS1 to the surface of NFS1. After the NFS1-linked persulfide sulfur is transferred to one of the conserved Cys residues of the scaffold, a reaction assisted by FXN. The core iron-sulfur cluster (ISC) assembly complex is involved in the de novo synthesis of a [2Fe-2S] cluster, the first step of the mitochondrial iron-sulfur protein biogenesis. This process is initiated by the cysteine desulfurase complex (NFS1:LYRM4:NDUFAB1) that produces persulfide which is delivered on the scaffold protein ISCU in a FXN-dependent manner. Then this complex is stabilized by FDX2 which provides reducing equivalents to accomplish the [2Fe-2S] cluster assembly. Finally, the [2Fe-2S] cluster is transferred from ISCU to chaperone proteins, including HSCB, HSPA9 and GLRX5. In Mus musculus (Mouse), this protein is Cysteine desulfurase.